Reading from the N-terminus, the 165-residue chain is Protein SprT (165 aa).

Residues 22 to 163 (LAQANLKLGC…RCVHCGEQLV (142 aa)) form the SprT-like domain. H78 lines the Zn(2+) pocket. Residue E79 is part of the active site. Position 82 (H82) interacts with Zn(2+).

The protein belongs to the SprT family. It depends on Zn(2+) as a cofactor.

It localises to the cytoplasm. The polypeptide is Protein SprT (Shigella dysenteriae serotype 1 (strain Sd197)).